The primary structure comprises 179 residues: Transcription initiation factor TFIID subunit 10 (179 aa).

Residues 1–23 are disordered; it reads MNDPEQYEPSSSTESVLMPPPAL.

This sequence belongs to the TAF10 family. In terms of assembly, component of the TFIID basal transcription factor complex, composed of TATA-box-binding protein tbp-1, and a number of TBP-associated factors (TAFs).

It localises to the nucleus. Its function is as follows. The TFIID basal transcription factor complex plays a major role in the initiation of RNA polymerase II (Pol II)-dependent transcription. TFIID recognizes and binds promoters via its subunit tbp-1, a TATA-box-binding protein, and promotes assembly of the pre-initiation complex (PIC). The TFIID complex consists of tbp-1 and TBP-associated factors (TAFs), including taf-10. Essential for early embryonic development, but not required for transcription of some genes; probably acts via activating transcription initiation by RNA Pol II, as part of the TFIID complex. This is Transcription initiation factor TFIID subunit 10 from Caenorhabditis elegans.